A 191-amino-acid polypeptide reads, in one-letter code: Ferric nitrobindin-like protein (191 aa).

A GXWXGXG motif is present at residues 20 to 26 (GNWAGAG).

The protein belongs to the nitrobindin family.

The chain is Ferric nitrobindin-like protein from Streptomyces avermitilis (strain ATCC 31267 / DSM 46492 / JCM 5070 / NBRC 14893 / NCIMB 12804 / NRRL 8165 / MA-4680).